Reading from the N-terminus, the 170-residue chain is Large ribosomal subunit protein uL11 (170 aa).

The protein belongs to the universal ribosomal protein uL11 family. Part of the ribosomal stalk of the 50S ribosomal subunit. Interacts with L10 and the large rRNA to form the base of the stalk. L10 forms an elongated spine to which L12 dimers bind in a sequential fashion forming a multimeric L10(L12)X complex.

Functionally, forms part of the ribosomal stalk which helps the ribosome interact with GTP-bound translation factors. This is Large ribosomal subunit protein uL11 from Saccharolobus solfataricus (strain ATCC 35092 / DSM 1617 / JCM 11322 / P2) (Sulfolobus solfataricus).